A 297-amino-acid chain; its full sequence is GTP cyclohydrolase FolE2 (297 aa).

The protein belongs to the GTP cyclohydrolase IV family.

The catalysed reaction is GTP + H2O = 7,8-dihydroneopterin 3'-triphosphate + formate + H(+). Its pathway is cofactor biosynthesis; 7,8-dihydroneopterin triphosphate biosynthesis; 7,8-dihydroneopterin triphosphate from GTP: step 1/1. Converts GTP to 7,8-dihydroneopterin triphosphate. This Pseudomonas fluorescens (strain ATCC BAA-477 / NRRL B-23932 / Pf-5) protein is GTP cyclohydrolase FolE2.